A 140-amino-acid chain; its full sequence is uncharacterized protein (140 aa).

Helical transmembrane passes span isoleucine 4–glycine 21 and leucine 26–leucine 48.

This sequence belongs to the bacteriophage holin family. Cp-1 holin subfamily.

It is found in the cell membrane. This is an uncharacterized protein from Listeria monocytogenes serovar 1/2a (strain ATCC BAA-679 / EGD-e).